The chain runs to 393 residues: DNA primase small subunit PriS (393 aa).

Active-site residues include aspartate 100, aspartate 102, and aspartate 296.

The protein belongs to the eukaryotic-type primase small subunit family. In terms of assembly, heterodimer of a small subunit (PriS) and a large subunit (PriL). Requires Mg(2+) as cofactor. The cofactor is Mn(2+).

In terms of biological role, catalytic subunit of DNA primase, an RNA polymerase that catalyzes the synthesis of short RNA molecules used as primers for DNA polymerase during DNA replication. The small subunit contains the primase catalytic core and has DNA synthesis activity on its own. Binding to the large subunit stabilizes and modulates the activity, increasing the rate of DNA synthesis while decreasing the length of the DNA fragments, and conferring RNA synthesis capability. The DNA polymerase activity may enable DNA primase to also catalyze primer extension after primer synthesis. May also play a role in DNA repair. The polypeptide is DNA primase small subunit PriS (Natronomonas pharaonis (strain ATCC 35678 / DSM 2160 / CIP 103997 / JCM 8858 / NBRC 14720 / NCIMB 2260 / Gabara) (Halobacterium pharaonis)).